The primary structure comprises 571 residues: MKDSRGKRRCLAFLKGLRLKTDPNLPGAKQKTPFNISRFWLLVIIVIYTATSACIYFDWSAIRNLLLTVGKYKHLNVGDYPDITLSPQYKRINSLYPITLAIHFTMSVFCGFLYDHIGPKFTAIIGQMCNIMSWVFLSIDSTTVDTTFLSFVFLGLGADTAFIPILTISNLYPDASTFILTVVGAAASLSYAVPATLNFICRRYPSTPFPYICYGYIFLILVPCLLVATFLLPLMPFKGLDYYIERDQSRRSGAEGDAHRGRRGDPKMVTSQTNDEVDVEMQPFENAQSEASKGRSGNGSNTPSTRGNTPNGGKQTRGKTTSESNRSSKGEGSAIQGVEEEDQATNSSKGVNEEDSDFHRKSISLFFKVLLSYPSICIIVYFILFNISTVFYGMVTDTYFSYDRSIINIINILMPISCIPCIIFGRFINRYGSAIIIILMNAFSALMHLTALIKHRAAGLVSAFLYMCVTSIYTSQIYCFIQNSFPSVVFGKLLGFASLCGGLFSLLCEKLYDQIVSKDGASIDPTNVVLLLVIAFILMFLPLTVLYFRKYERSIEDLHQEVAMSQSSGRA.

N-linked (GlcNAc...) asparagine glycosylation occurs at N35. Helical transmembrane passes span 39-59, 94-114, 117-137, 148-168, 177-197, and 217-237; these read FWLL…YFDW, SLYP…GFLY, IGPK…WVFL, FLSF…ILTI, TFIL…PATL, and IFLI…LMPF. Residues N298, N325, and N346 are each glycosylated (N-linked (GlcNAc...) asparagine). A helical transmembrane segment spans residues 365 to 385; it reads LFFKVLLSYPSICIIVYFILF. The N-linked (GlcNAc...) asparagine glycan is linked to N386. 5 consecutive transmembrane segments (helical) span residues 405 to 425, 433 to 453, 461 to 481, 488 to 508, and 528 to 548; these read SIIN…IIFG, SAII…TALI, VSAF…YCFI, VVFG…SLLC, and VVLL…VLYF.

It belongs to the SLC43A transporter (TC 2.A.1.44) family.

Its subcellular location is the membrane. The catalysed reaction is L-arginine(in) = L-arginine(out). Sodium-independent cationic amino acid transporter. Transports L-arginine, L-lysine, L-histidine and L-ornithine. The chain is Cationic amino acid transporter 8 from Plasmodium vivax (strain Salvador I).